The following is a 220-amino-acid chain: MSVKIHYQNTHFITSAPDIRHLPEDEGIEIAFAGRSNTGKSSSLNRLTNQKNLAKTSKTPGRTQLINLFKVADGCHIVDLPGYGFAQVPLEMKLKWQRALGEYLQKRQSLKGLVVLMDIRHPMKDLDQQLIIWAVECGIPVQVMLTKADKLKSGARKAQVLKVREEAKTFGGDVAVDAFSSLSGIGVDTLRAKLDEWYAPMLAALAEQEEGEQPESSTDQ.

The EngB-type G domain occupies 26–200; the sequence is EGIEIAFAGR…RAKLDEWYAP (175 aa). GTP is bound by residues 34-41, 61-65, 79-82, 146-149, and 179-181; these read GRSNTGKS, GRTQL, DLPG, TKAD, and FSS. Mg(2+) contacts are provided by S41 and T63.

The protein belongs to the TRAFAC class TrmE-Era-EngA-EngB-Septin-like GTPase superfamily. EngB GTPase family. The cofactor is Mg(2+).

Necessary for normal cell division and for the maintenance of normal septation. The chain is Probable GTP-binding protein EngB from Vibrio cholerae serotype O1 (strain ATCC 39541 / Classical Ogawa 395 / O395).